We begin with the raw amino-acid sequence, 1015 residues long: Condensin complex subunit 3 (1015 aa).

5 HEAT repeats span residues 94 to 131, 138 to 173, 174 to 212, 238 to 275, and 276 to 313; these read GLLNYLFTFLLKSHEANSNAVRFRVCLLINKLLGSMPE, DVFDKINKAMLIRLKDKIPNVRIQAVLALSRLQDPK, DDECPVVNAYATLIENDSNPEVRRAVLSCIAPSAKTLPK, MRAMSIAQRVMLLQQGLNDRSDAVKQAMQKHLLQGWLR, and FSEGNILELLHRLDVENSSEVAVSVLNALFSITPLSEL. Ser390 carries the phosphoserine modification. 3 HEAT repeats span residues 399–436, 439–478, and 617–654; these read EFIGQQLILIIKSLDTSEEGGRKKLLAVLQEILILPTI, SLVSFLVERLLHIIIDDNKRTQIVTEIISEIRAPIVTVGV, and DFARKHFVLLLQVLQIDDVTIKISALKAIFDQLMTFGI. Ser674 bears the Phosphoserine mark. 2 HEAT repeats span residues 687–724 and 865–907; these read ATAKNVLKLLSDFLDSEVSELRTGAAEGLAKLMFSGLL and KDLL…QAEA. A Phosphothreonine modification is found at Thr931. The segment covering 941-950 has biased composition (polar residues); sequence ASKSTQLKTN. The tract at residues 941–994 is disordered; the sequence is ASKSTQLKTNRGQRKVTVSARTNRRCQTAEADSESDHEVPEPESEMKMRLPRRA. Ser973, Ser975, Ser1002, and Ser1015 each carry phosphoserine. Residues 974-988 show a composition bias toward basic and acidic residues; the sequence is ESDHEVPEPESEMKM.

The protein belongs to the CND3 (condensin subunit 3) family. Component of the condensin complex, which contains the SMC2 and SMC4 heterodimer, and three non SMC subunits that probably regulate the complex: NCAPH/BRRN1, NCAPD2/CAPD2 and NCAPG. In terms of processing, phosphorylated by CDK1. Its phosphorylation, as well as that of NCAPD2 and NCAPH subunits, activates the condensin complex and is required for chromosome condensation. As to expression, highly expressed in testis.

The protein resides in the nucleus. It localises to the cytoplasm. Its subcellular location is the chromosome. Regulatory subunit of the condensin complex, a complex required for conversion of interphase chromatin into mitotic-like condense chromosomes. The condensin complex probably introduces positive supercoils into relaxed DNA in the presence of type I topoisomerases and converts nicked DNA into positive knotted forms in the presence of type II topoisomerases. The polypeptide is Condensin complex subunit 3 (NCAPG) (Homo sapiens (Human)).